Reading from the N-terminus, the 193-residue chain is Acyl carrier protein phosphodiesterase (193 aa).

This sequence belongs to the AcpH family.

The catalysed reaction is holo-[ACP] + H2O = apo-[ACP] + (R)-4'-phosphopantetheine + H(+). In terms of biological role, converts holo-ACP to apo-ACP by hydrolytic cleavage of the phosphopantetheine prosthetic group from ACP. The sequence is that of Acyl carrier protein phosphodiesterase from Salmonella paratyphi A (strain ATCC 9150 / SARB42).